A 320-amino-acid polypeptide reads, in one-letter code: Beta-carotene 4-ketolase 3 (320 aa).

The enzyme catalyses echinenone + 2 AH2 + 2 O2 = canthaxanthin + 2 A + 3 H2O. It carries out the reaction all-trans-beta-carotene + 2 AH2 + 2 O2 = echinenone + 2 A + 3 H2O. It functions in the pathway carotenoid biosynthesis. In terms of biological role, involved in the biosynthesis of ketocarotenoids which are powerful anti-oxidative molecules. Catalyzes the conversion of beta-carotene to canthaxanthin via echinenone. The chain is Beta-carotene 4-ketolase 3 from Haematococcus lacustris (Green alga).